The chain runs to 252 residues: 3-dehydroquinate dehydratase (252 aa).

3-dehydroquinate is bound by residues 46–48 (EWR) and arginine 82. Histidine 143 serves as the catalytic Proton donor/acceptor. Lysine 170 serves as the catalytic Schiff-base intermediate with substrate. Residues arginine 212, serine 231, and glutamine 235 each coordinate 3-dehydroquinate.

This sequence belongs to the type-I 3-dehydroquinase family. In terms of assembly, homodimer.

It carries out the reaction 3-dehydroquinate = 3-dehydroshikimate + H2O. It participates in metabolic intermediate biosynthesis; chorismate biosynthesis; chorismate from D-erythrose 4-phosphate and phosphoenolpyruvate: step 3/7. Involved in the third step of the chorismate pathway, which leads to the biosynthesis of aromatic amino acids. Catalyzes the cis-dehydration of 3-dehydroquinate (DHQ) and introduces the first double bond of the aromatic ring to yield 3-dehydroshikimate. In Listeria monocytogenes serotype 4a (strain HCC23), this protein is 3-dehydroquinate dehydratase.